The sequence spans 187 residues: ATP synthase subunit b 2 (187 aa).

Residues 1 to 13 (MAESHATGTTTHT) are compositionally biased toward polar residues. Residues 1 to 21 (MAESHATGTTTHTEVPHGKPE) form a disordered region. Residues 31–53 (ASQLVSFAIAFALLYVIVSRFAL) traverse the membrane as a helical segment.

This sequence belongs to the ATPase B chain family. In terms of assembly, F-type ATPases have 2 components, F(1) - the catalytic core - and F(0) - the membrane proton channel. F(1) has five subunits: alpha(3), beta(3), gamma(1), delta(1), epsilon(1). F(0) has three main subunits: a(1), b(2) and c(10-14). The alpha and beta chains form an alternating ring which encloses part of the gamma chain. F(1) is attached to F(0) by a central stalk formed by the gamma and epsilon chains, while a peripheral stalk is formed by the delta and b chains.

The protein resides in the cell inner membrane. In terms of biological role, f(1)F(0) ATP synthase produces ATP from ADP in the presence of a proton or sodium gradient. F-type ATPases consist of two structural domains, F(1) containing the extramembraneous catalytic core and F(0) containing the membrane proton channel, linked together by a central stalk and a peripheral stalk. During catalysis, ATP synthesis in the catalytic domain of F(1) is coupled via a rotary mechanism of the central stalk subunits to proton translocation. Component of the F(0) channel, it forms part of the peripheral stalk, linking F(1) to F(0). The b'-subunit is a diverged and duplicated form of b found in plants and photosynthetic bacteria. This Afipia carboxidovorans (strain ATCC 49405 / DSM 1227 / KCTC 32145 / OM5) (Oligotropha carboxidovorans) protein is ATP synthase subunit b 2 (atpF2).